The sequence spans 327 residues: Undecaprenyl-phosphate 4-deoxy-4-formamido-L-arabinose transferase (327 aa).

A run of 2 helical transmembrane segments spans residues 235–255 (LLSL…VLLV) and 270–290 (VFTL…GMGL).

This sequence belongs to the glycosyltransferase 2 family.

It localises to the cell inner membrane. The enzyme catalyses UDP-4-deoxy-4-formamido-beta-L-arabinose + di-trans,octa-cis-undecaprenyl phosphate = 4-deoxy-4-formamido-alpha-L-arabinopyranosyl di-trans,octa-cis-undecaprenyl phosphate + UDP. It functions in the pathway glycolipid biosynthesis; 4-amino-4-deoxy-alpha-L-arabinose undecaprenyl phosphate biosynthesis; 4-amino-4-deoxy-alpha-L-arabinose undecaprenyl phosphate from UDP-4-deoxy-4-formamido-beta-L-arabinose and undecaprenyl phosphate: step 1/2. The protein operates within bacterial outer membrane biogenesis; lipopolysaccharide biosynthesis. Its function is as follows. Catalyzes the transfer of 4-deoxy-4-formamido-L-arabinose from UDP to undecaprenyl phosphate. The modified arabinose is attached to lipid A and is required for resistance to polymyxin and cationic antimicrobial peptides. This Yersinia pestis bv. Antiqua (strain Antiqua) protein is Undecaprenyl-phosphate 4-deoxy-4-formamido-L-arabinose transferase.